A 258-amino-acid chain; its full sequence is Acyl-[acyl-carrier-protein]--UDP-N-acetylglucosamine O-acyltransferase (258 aa).

Belongs to the transferase hexapeptide repeat family. LpxA subfamily. Homotrimer.

The protein resides in the cytoplasm. The enzyme catalyses a (3R)-hydroxyacyl-[ACP] + UDP-N-acetyl-alpha-D-glucosamine = a UDP-3-O-[(3R)-3-hydroxyacyl]-N-acetyl-alpha-D-glucosamine + holo-[ACP]. The protein operates within glycolipid biosynthesis; lipid IV(A) biosynthesis; lipid IV(A) from (3R)-3-hydroxytetradecanoyl-[acyl-carrier-protein] and UDP-N-acetyl-alpha-D-glucosamine: step 1/6. Functionally, involved in the biosynthesis of lipid A, a phosphorylated glycolipid that anchors the lipopolysaccharide to the outer membrane of the cell. In Saccharophagus degradans (strain 2-40 / ATCC 43961 / DSM 17024), this protein is Acyl-[acyl-carrier-protein]--UDP-N-acetylglucosamine O-acyltransferase.